A 258-amino-acid polypeptide reads, in one-letter code: MELNEVTISRAIIDRFYEKLIANLEVDVAVVGGGPSGLVAAWRLARAGRKVALFERKLSIGGGMWGGAMLFNEIVVQKSALHVLDAMEIGYRLYAEDYYTADAVEAISTLTSQAAKAGVAIFNCVTVEDVMIRPDRIVGLVLNWSPVEMAGLHVDPLAMRASFVIDATGHATEVVHVVAKKVPGTLRTDSGKIEGEKSMWSDRAESLTLENTREVYPGLYVAGMAGNATFGGPRMGAIFGGMLLSGEKVAAEILERLE.

NAD(+) contacts are provided by residues Ser-36, 55-56 (ER), Gly-63, Val-127, and 153-155 (HVD). Fe cation-binding residues include Asp-155 and His-170. Position 224 (Met-224) interacts with NAD(+). Arg-234 lines the glycine pocket.

This sequence belongs to the THI4 family. In terms of assembly, homooctamer; tetramer of dimers. It depends on Fe(2+) as a cofactor.

It catalyses the reaction hydrogen sulfide + glycine + NAD(+) = ADP-5-ethyl-4-methylthiazole-2-carboxylate + nicotinamide + 3 H2O + H(+). It participates in cofactor biosynthesis; thiamine diphosphate biosynthesis. In terms of biological role, involved in the biosynthesis of the thiazole moiety of thiamine. Catalyzes the conversion of NAD and glycine to adenosine diphosphate 5-(2-hydroxyethyl)-4-methylthiazole-2-carboxylate (ADT), an adenylated thiazole intermediate, using free sulfide as a source of sulfur. This Desulfosudis oleivorans (strain DSM 6200 / JCM 39069 / Hxd3) (Desulfococcus oleovorans) protein is Thiamine thiazole synthase.